A 388-amino-acid polypeptide reads, in one-letter code: Chorismate synthase (388 aa).

NADP(+)-binding residues include R39 and R45. FMN contacts are provided by residues 130-132 (RSS), 251-252 (NA), G296, 311-315 (KPIPT), and R337.

The protein belongs to the chorismate synthase family. Homotetramer. Requires FMNH2 as cofactor.

The enzyme catalyses 5-O-(1-carboxyvinyl)-3-phosphoshikimate = chorismate + phosphate. It functions in the pathway metabolic intermediate biosynthesis; chorismate biosynthesis; chorismate from D-erythrose 4-phosphate and phosphoenolpyruvate: step 7/7. Catalyzes the anti-1,4-elimination of the C-3 phosphate and the C-6 proR hydrogen from 5-enolpyruvylshikimate-3-phosphate (EPSP) to yield chorismate, which is the branch point compound that serves as the starting substrate for the three terminal pathways of aromatic amino acid biosynthesis. This reaction introduces a second double bond into the aromatic ring system. The sequence is that of Chorismate synthase from Streptococcus thermophilus (strain CNRZ 1066).